Here is a 556-residue protein sequence, read N- to C-terminus: Probable zinc metalloprotease EGY2, chloroplastic (556 aa).

The N-terminal 64 residues, Met-1 to Arg-64, are a transit peptide targeting the chloroplast. The disordered stretch occupies residues Val-63–Gly-133. 7 helical membrane-spanning segments follow: residues Ala-267–Leu-287, Leu-311–Val-331, Gly-336–Ile-356, Ala-374–Val-394, Pro-437–Gly-457, Leu-484–Phe-504, and Leu-527–Thr-547.

Belongs to the peptidase M50B family.

Its subcellular location is the plastid. It localises to the chloroplast membrane. In terms of biological role, probable membrane-associated metalloprotease that may be involved in chloroplast development. The chain is Probable zinc metalloprotease EGY2, chloroplastic (EGY2) from Arabidopsis thaliana (Mouse-ear cress).